Here is a 342-residue protein sequence, read N- to C-terminus: MSTDKITFLTNWHATPYHAPLYLAQSKGYFKEEGLKVALLEPNDPSDVTEIIGSGKVDMGFKAMIHTLAAKARNFPVTSIGSLLDEPFTGVVYLKDSGITEDFRSLKGKKIGYVGEFGKIQIDELTKYYGMTADDYTAVRCGMNVTKAIIRGDIDAGIGLENVQMVELAEWLASQNRPRDDVQIVRIDQLAELGCCCFCSILYIANDAFLAANPEKVQKFMRAVKRATDYVLAEPAAAFEEYVDMKPIMGTPVNRKIFERSFAYFSRDLKNVSRDWAKVTNYGKRLGILDADFQPNYTNQYLSWTLDADSTDPLGDQKRMAELQKEVACEGGFKRLQVASSA.

N6-(pyridoxal phosphate)lysine is present on K62. H66 is a catalytic residue. Residue 115–118 (GEFG) coordinates pyridoxal 5'-phosphate. A CCCFC; essential for catalytic activity, may be the site of iron coordination motif is present at residues 195–199 (CCCFC).

It belongs to the NMT1/THI5 family. As to quaternary structure, homodimer. Fe cation serves as cofactor.

The catalysed reaction is N(6)-(pyridoxal phosphate)-L-lysyl-[4-amino-5-hydroxymethyl-2-methylpyrimidine phosphate synthase] + L-histidyl-[4-amino-5-hydroxymethyl-2-methylpyrimidine phosphate synthase] + 2 Fe(3+) + 4 H2O = L-lysyl-[4-amino-5-hydroxymethyl-2-methylpyrimidine phosphate synthase] + (2S)-2-amino-5-hydroxy-4-oxopentanoyl-[4-amino-5-hydroxymethyl-2-methylpyrimidine phosphate synthase] + 4-amino-2-methyl-5-(phosphooxymethyl)pyrimidine + 3-oxopropanoate + 2 Fe(2+) + 2 H(+). It functions in the pathway cofactor biosynthesis; thiamine diphosphate biosynthesis. Responsible for the formation of the pyrimidine heterocycle in the thiamine biosynthesis pathway. Catalyzes the formation of hydroxymethylpyrimidine phosphate (HMP-P) from histidine and pyridoxal phosphate (PLP). The protein uses PLP and the active site histidine to form HMP-P, generating an inactive enzyme. The enzyme can only undergo a single turnover, which suggests it is a suicide enzyme. This Aspergillus parasiticus protein is 4-amino-5-hydroxymethyl-2-methylpyrimidine phosphate synthase.